Here is a 597-residue protein sequence, read N- to C-terminus: Elongation factor 4 (597 aa).

Positions 2–184 (NNIRNFSIIA…SLITKVPPPK (183 aa)) constitute a tr-type G domain. GTP contacts are provided by residues 14-19 (DHGKST) and 131-134 (NKID).

The protein belongs to the TRAFAC class translation factor GTPase superfamily. Classic translation factor GTPase family. LepA subfamily.

The protein localises to the cell inner membrane. The catalysed reaction is GTP + H2O = GDP + phosphate + H(+). Functionally, required for accurate and efficient protein synthesis under certain stress conditions. May act as a fidelity factor of the translation reaction, by catalyzing a one-codon backward translocation of tRNAs on improperly translocated ribosomes. Back-translocation proceeds from a post-translocation (POST) complex to a pre-translocation (PRE) complex, thus giving elongation factor G a second chance to translocate the tRNAs correctly. Binds to ribosomes in a GTP-dependent manner. This Janthinobacterium sp. (strain Marseille) (Minibacterium massiliensis) protein is Elongation factor 4.